We begin with the raw amino-acid sequence, 147 residues long: Lipoprotein signal peptidase (147 aa).

The next 4 helical transmembrane spans lie at 10 to 30 (ISIF…IKFL), 34 to 54 (GIVK…GTAF), 59 to 79 (FLGS…LVYM), and 87 to 107 (WFIY…RLIY). Residues aspartate 112 and aspartate 130 contribute to the active site. Residues 121 to 141 (LHWPAFNVADSAISIGIVLFV) form a helical membrane-spanning segment.

The protein belongs to the peptidase A8 family.

The protein resides in the cell inner membrane. The catalysed reaction is Release of signal peptides from bacterial membrane prolipoproteins. Hydrolyzes -Xaa-Yaa-Zaa-|-(S,diacylglyceryl)Cys-, in which Xaa is hydrophobic (preferably Leu), and Yaa (Ala or Ser) and Zaa (Gly or Ala) have small, neutral side chains.. It participates in protein modification; lipoprotein biosynthesis (signal peptide cleavage). Functionally, this protein specifically catalyzes the removal of signal peptides from prolipoproteins. The chain is Lipoprotein signal peptidase from Thermodesulfovibrio yellowstonii (strain ATCC 51303 / DSM 11347 / YP87).